The primary structure comprises 928 residues: Tyrosine-protein phosphatase 3 (928 aa).

Thr75 carries the phosphothreonine modification. Residues 111–232 form the Rhodanese domain; the sequence is PDEKVLLLDV…FKILFPDHIN (122 aa). Residues 247–307 form a disordered region; sequence KSPKTNLMNS…PRNVLSDSPM (61 aa). Ser248 is subject to Phosphoserine. Polar residues-rich tracts occupy residues 249–259 and 265–275; these read PKTNLMNSLHN and TATTPLSSPQM. Residues 280–289 are compositionally biased toward basic and acidic residues; that stretch reads KVPDDSRSDH. A compositionally biased stretch (low complexity) spans 290-307; it reads SNFSSSPSPRNVLSDSPM. 2 positions are modified to phosphoserine: Ser297 and Ser368. Disordered stretches follow at residues 467–487 and 672–713; these read LTSTSSSTIMPPKFPDVNKVQ and MRKN…NNNN. In terms of domain architecture, Tyrosine-protein phosphatase spans 502-878; that stretch reads YKSMLSLESD…IFIYDCLLFY (377 aa). Residues 672-691 show a composition bias toward polar residues; it reads MRKNTMGTQNSSLYSAGVQG. Positions 692-713 are enriched in low complexity; that stretch reads NSSNYSTDNDNDNDNNNNNNNN. Cys804 serves as the catalytic Phosphocysteine intermediate.

Belongs to the protein-tyrosine phosphatase family. Non-receptor class subfamily. In terms of assembly, interacts with HOG1.

It localises to the cytoplasm. It carries out the reaction O-phospho-L-tyrosyl-[protein] + H2O = L-tyrosyl-[protein] + phosphate. Major phosphatase responsible for tyrosine dephosphorylation of MAP kinases FUS3 and HOG1 to inactivate their activity; it also has important roles, along with MSG5, in the inactivation of FUS3 following pheromone stimulation. This is Tyrosine-protein phosphatase 3 (PTP3) from Saccharomyces cerevisiae (strain ATCC 204508 / S288c) (Baker's yeast).